The following is a 286-amino-acid chain: Acetyl-coenzyme A carboxylase carboxyl transferase subunit beta (286 aa).

A CoA carboxyltransferase N-terminal domain is found at 28–286; that stretch reads LMQKCSNCKK…KMHMDGRQLK (259 aa). Zn(2+)-binding residues include C32, C35, C51, and C54. Residues 32–54 form a C4-type zinc finger; it reads CSNCKKIYYRKEMVKALQVCPNC.

Belongs to the AccD/PCCB family. In terms of assembly, acetyl-CoA carboxylase is a heterohexamer composed of biotin carboxyl carrier protein (AccB), biotin carboxylase (AccC) and two subunits each of ACCase subunit alpha (AccA) and ACCase subunit beta (AccD). Requires Zn(2+) as cofactor.

The protein resides in the cytoplasm. The catalysed reaction is N(6)-carboxybiotinyl-L-lysyl-[protein] + acetyl-CoA = N(6)-biotinyl-L-lysyl-[protein] + malonyl-CoA. Its pathway is lipid metabolism; malonyl-CoA biosynthesis; malonyl-CoA from acetyl-CoA: step 1/1. Its function is as follows. Component of the acetyl coenzyme A carboxylase (ACC) complex. Biotin carboxylase (BC) catalyzes the carboxylation of biotin on its carrier protein (BCCP) and then the CO(2) group is transferred by the transcarboxylase to acetyl-CoA to form malonyl-CoA. This chain is Acetyl-coenzyme A carboxylase carboxyl transferase subunit beta, found in Oceanobacillus iheyensis (strain DSM 14371 / CIP 107618 / JCM 11309 / KCTC 3954 / HTE831).